The chain runs to 523 residues: Glycerate kinase (523 aa).

Serine 60 carries the phosphoserine modification. At lysine 200 the chain carries N6-acetyllysine.

It belongs to the glycerate kinase type-2 family.

It localises to the cytoplasm. The enzyme catalyses (R)-glycerate + ATP = (2R)-3-phosphoglycerate + ADP + H(+). The protein is Glycerate kinase (GLYCTK) of Bos taurus (Bovine).